The following is a 507-amino-acid chain: ESX-5 secretion system ATPase EccB5 (507 aa).

The helical transmembrane segment at 56–76 (VVASVSAALVICLGSLLWSFI) threads the bilayer.

The protein belongs to the EccB family. As to quaternary structure, part of the ESX-5 / type VII secretion system (T7SS), which is composed of cytosolic and membrane components. The ESX-5 membrane complex is composed of EccB5, EccC5, EccD5 and EccE5.

It localises to the cell inner membrane. In terms of biological role, an ATPase. Part of the ESX-5 specialized secretion system, which is responsible for the secretion of EsxN and a number of PE_PGRS and PPE proteins. The sequence is that of ESX-5 secretion system ATPase EccB5 from Mycobacterium marinum (strain ATCC BAA-535 / M).